A 666-amino-acid chain; its full sequence is UvrABC system protein B (666 aa).

Residues E25–R412 form the Helicase ATP-binding domain. G38–T45 serves as a coordination point for ATP. The short motif at Y91 to I114 is the Beta-hairpin element. The 167-residue stretch at Q429–I595 folds into the Helicase C-terminal domain. Residues P626–R661 enclose the UVR domain.

It belongs to the UvrB family. Forms a heterotetramer with UvrA during the search for lesions. Interacts with UvrC in an incision complex.

It is found in the cytoplasm. In terms of biological role, the UvrABC repair system catalyzes the recognition and processing of DNA lesions. A damage recognition complex composed of 2 UvrA and 2 UvrB subunits scans DNA for abnormalities. Upon binding of the UvrA(2)B(2) complex to a putative damaged site, the DNA wraps around one UvrB monomer. DNA wrap is dependent on ATP binding by UvrB and probably causes local melting of the DNA helix, facilitating insertion of UvrB beta-hairpin between the DNA strands. Then UvrB probes one DNA strand for the presence of a lesion. If a lesion is found the UvrA subunits dissociate and the UvrB-DNA preincision complex is formed. This complex is subsequently bound by UvrC and the second UvrB is released. If no lesion is found, the DNA wraps around the other UvrB subunit that will check the other stand for damage. The sequence is that of UvrABC system protein B from Synechococcus sp. (strain ATCC 27144 / PCC 6301 / SAUG 1402/1) (Anacystis nidulans).